The chain runs to 311 residues: T-cell immunomodulatory protein (311 aa).

Residues Asn52, Asn70, and Asn181 are each glycosylated (N-linked (GlcNAc...) asparagine). Residues 266–286 (VLLTAIALIGVCVFILAIIGI) form a helical membrane-spanning segment.

Belongs to the TIP family. As to quaternary structure, interacts with RUVBL1, RUVBL2 and alpha-tubulin.

It localises to the secreted. Its subcellular location is the cell membrane. In terms of biological role, modulator of T-cell function. Has a protective effect in graft versus host disease model. The sequence is that of T-cell immunomodulatory protein from Macaca fascicularis (Crab-eating macaque).